The primary structure comprises 360 residues: Membrane-bound lytic murein transglycosylase C (360 aa).

The signal sequence occupies residues 1–16; that stretch reads MKKLLALAVIAPLLIS. Residue Cys-17 is the site of N-palmitoyl cysteine attachment. Cys-17 is lipidated: S-diacylglycerol cysteine.

The protein belongs to the transglycosylase Slt family.

It is found in the cell outer membrane. It catalyses the reaction Exolytic cleavage of the (1-&gt;4)-beta-glycosidic linkage between N-acetylmuramic acid (MurNAc) and N-acetylglucosamine (GlcNAc) residues in peptidoglycan, from either the reducing or the non-reducing ends of the peptidoglycan chains, with concomitant formation of a 1,6-anhydrobond in the MurNAc residue.. Functionally, murein-degrading enzyme. May play a role in recycling of muropeptides during cell elongation and/or cell division. In Salmonella arizonae (strain ATCC BAA-731 / CDC346-86 / RSK2980), this protein is Membrane-bound lytic murein transglycosylase C.